The primary structure comprises 777 residues: MGRGSGTFERLLDKATSQLLLETDWESILQICDLIRQGDTQAKYAVNSIKKKVNDKNPHVALYALEVMESVVKNCGQTVHDEVANKQTMEELKDLLKRQVEVNVRNKILYLIQAWAHAFRNEPKYKVVQDTYQIMKVEGHVFPEFKESDAMFAAERAPDWVDAEECHRCRVQFGVMTRKHHCRACGQIFCGKCSSKYSTIPKFGIEKEVRVCEPCYEQLNRKAEGKATSTTELPPEYLTSPLSQQSQLPPKRDETALQEEEELQLALALSQSEAEEKERLRQKSTYTSYPKAEPMPSASSAPPASSLYSSPVNSSAPLAEDIDPELARYLNRNYWEKKQEEARKSPTPSAPVPLTEPAAQPGEGHAAPTNVVENPLPETDSQPIPPSGGPFSEPQFHNGESEESHEQFLKALQNAVTTFVNRMKSNHMRGRSITNDSAVLSLFQSINGMHPQLLELLNQLDERRLYYEGLQDKLAQIRDARGALSALREEHREKLRRAAEEAERQRQIQLAQKLEIMRQKKQEYLEVQRQLAIQRLQEQEKERQMRLEQQKQTVQMRAQMPAFPLPYAQLQAMPAAGGVLYQPSGPASFPSTFSPAGSVEGSPMHGVYMSQPAPAAGPYPSMPSTAADPSMVSAYMYPAGATGAQAAPQAQAGPTASPAYSSYQPTPTAGYQNVASQAPQSLPAISQPPQSSTMGYMGSQSVSMGYQPYNMQNLMTTLPSQDASLPPQQPYIAGQQPMYQQMAPSGGPPQQQPPVAQQPQAQGPPAQGSEAQLISFD.

The 129-residue stretch at 15 to 143 (ATSQLLLETD…IMKVEGHVFP (129 aa)) folds into the VHS domain. The FYVE-type zinc finger occupies 160–220 (WVDAEECHRC…VCEPCYEQLN (61 aa)). Zn(2+) is bound by residues Cys-166, Cys-169, Cys-182, Cys-185, Cys-190, and Cys-193. Lys-207 is subject to N6-acetyllysine. Cys-212 and Cys-215 together coordinate Zn(2+). A Phosphotyrosine modification is found at Tyr-216. The disordered stretch occupies residues 223–319 (AEGKATSTTE…SPVNSSAPLA (97 aa)). Positions 225–543 (GKATSTTELP…QRLQEQEKER (319 aa)) are interaction with SNX1. A UIM domain is found at 258–277 (QEEEELQLALALSQSEAEEK). Residues 290 to 311 (PKAEPMPSASSAPPASSLYSSP) are compositionally biased toward low complexity. 3 positions are modified to phosphotyrosine: Tyr-308, Tyr-329, and Tyr-334. Residues 338 to 407 (KQEEARKSPT…NGESEESHEQ (70 aa)) form a disordered region. The segment at 445–543 (SINGMHPQLL…QRLQEQEKER (99 aa)) is interaction with SNAP25 and TRAK2. An interaction with STAM region spans residues 454–572 (LELLNQLDER…FPLPYAQLQA (119 aa)). Residues 480–777 (ARGALSALRE…GSEAQLISFD (298 aa)) form an interaction with NF2 region. The residue at position 551 (Lys-551) is an N6-succinyllysine. The interval 718-777 (LPSQDASLPPQQPYIAGQQPMYQQMAPSGGPPQQQPPVAQQPQAQGPPAQGSEAQLISFD) is disordered. Positions 753 to 768 (PPVAQQPQAQGPPAQG) are enriched in low complexity.

In terms of assembly, component of the ESCRT-0 complex composed of STAM or STAM2 and HGS. Part of a complex at least composed of HSG, STAM2 (or probably STAM) and EPS15. Interacts with STAM. Interacts with STAM2. Interacts with EPS15; the interaction is direct, calcium-dependent and inhibited by SNAP25. Identified in a complex with STAM and LITAF. Found in a complex with STAM and E3 ligase ITCH and DTX3L. Interacts with E3 ligase DTX3L; the interaction brings together STAM and HSG, promotes their recruitment to early endosomes and decreases STAM and HGS ubiquitination by ITCH. Interacts with NF2; the interaction is direct. Interacts with ubiquitin; the interaction is direct. Interacts with VPS37C. Interacts with SMAD1, SMAD2 and SMAD3. Interacts with TSG101; the interaction mediates the association with the ESCRT-I complex. Interacts with SNAP25; the interaction is direct and decreases with addition of increasing concentrations of free calcium. Interacts with SNX1; the interaction is direct. Component of a 550 kDa membrane complex at least composed of HGS and SNX1 but excluding EGFR. Interacts with TRAK1. Interacts with TRAK2. Component of the CART complex, at least composed of ACTN4, HGS/HRS, MYO5B and TRIM3. Interacts (via UIM domain) with UBQLN1 (via ubiquitin-like domain). Interacts with ARRDC3. Identified in a complex containing at least ARRDC4, AVPR2 and HGS. Interacts with LAPTM4B; promotes HGS ubiquitination. Post-translationally, phosphorylated on Tyr-334. A minor site of phosphorylation on Tyr-329 is detected. Phosphorylation occurs in response to EGF, IL-2, GM-CSF and HGF. Ubiquitinated. Ubiquitinated by ITCH. In terms of tissue distribution, ubiquitous expression in adult and fetal tissues with higher expression in testis and peripheral blood leukocytes.

The protein resides in the cytoplasm. It localises to the early endosome membrane. Its subcellular location is the endosome. It is found in the multivesicular body membrane. Involved in intracellular signal transduction mediated by cytokines and growth factors. When associated with STAM, it suppresses DNA signaling upon stimulation by IL-2 and GM-CSF. Could be a direct effector of PI3-kinase in vesicular pathway via early endosomes and may regulate trafficking to early and late endosomes by recruiting clathrin. May concentrate ubiquitinated receptors within clathrin-coated regions. Involved in down-regulation of receptor tyrosine kinase via multivesicular body (MVBs) when complexed with STAM (ESCRT-0 complex). The ESCRT-0 complex binds ubiquitin and acts as a sorting machinery that recognizes ubiquitinated receptors and transfers them to further sequential lysosomal sorting/trafficking processes. May contribute to the efficient recruitment of SMADs to the activin receptor complex. Involved in receptor recycling via its association with the CART complex, a multiprotein complex required for efficient transferrin receptor recycling but not for EGFR degradation. The protein is Hepatocyte growth factor-regulated tyrosine kinase substrate (HGS) of Homo sapiens (Human).